A 278-amino-acid polypeptide reads, in one-letter code: Large ribosomal subunit protein uL2 (278 aa).

Residues 226 to 278 (NPIDHPHGGGEGRTSGGRHPVTPWGKPTKGKKTRSNKSTDKFILISRHKRKKK) are disordered.

The protein belongs to the universal ribosomal protein uL2 family. In terms of assembly, part of the 50S ribosomal subunit. Forms a bridge to the 30S subunit in the 70S ribosome.

Its function is as follows. One of the primary rRNA binding proteins. Required for association of the 30S and 50S subunits to form the 70S ribosome, for tRNA binding and peptide bond formation. It has been suggested to have peptidyltransferase activity; this is somewhat controversial. Makes several contacts with the 16S rRNA in the 70S ribosome. The protein is Large ribosomal subunit protein uL2 of Rhodopseudomonas palustris (strain HaA2).